The primary structure comprises 402 residues: MKREYDVLVVGGGPGGAFAAKTFAEKGYSVLLTEKRPAIGAPVRCAEGVGKALMHEFFKPEDRWVAAEIEKANIIAPDGFKMELEPEKAGAEVGYVLHRKVFDRDLVWMAAGAGADIQVKTRAVTPIMEDGAVKGAILNQGGIAQEVRAGLTIAADGVESKFARWCGVDTTVPLREMETCAQYLMTGIDIDAHATEFYVGNNIAPGGYVWIFPKGDKTANVGIGVGGDRCKPGNRPIDYLNRFVARNFPNGKTIELIAGGVSICQPLPCTVANNLMIVGDAARVSDPLTGGGIYAALYTGKLAGDVGSKAIEKGDTSTQALMPYDETWRASYLGKALERNYQIKEVFVKLNDDDLNAIVHSVSKMNLSDFNTLNLIKNIIAANPKLAIKLGKAGLKSLLDSF.

FAD-binding residues include glycine 15, glutamate 34, cysteine 45, alanine 46, glycine 48, arginine 99, alanine 123, aspartate 280, glycine 292, and isoleucine 293.

The protein belongs to the geranylgeranyl reductase family. DGGGPL reductase subfamily. It depends on FAD as a cofactor.

It catalyses the reaction a 2,3-bis-O-phytanyl-sn-glycerol 1-phospholipid + 8 oxidized 2[4Fe-4S]-[ferredoxin] = a 2,3-bis-O-(geranylgeranyl)-sn-glycerol 1-phospholipid + 8 reduced 2[4Fe-4S]-[ferredoxin] + 16 H(+). The enzyme catalyses 2,3-bis-O-(phytanyl)-sn-glycerol 1-phosphate + 8 oxidized 2[4Fe-4S]-[ferredoxin] = 2,3-bis-O-(geranylgeranyl)-sn-glycerol 1-phosphate + 8 reduced 2[4Fe-4S]-[ferredoxin] + 16 H(+). It carries out the reaction a 2,3-bis-O-phytanyl-sn-glycerol 1-phospholipid + 8 A = a 2,3-bis-O-(geranylgeranyl)-sn-glycerol 1-phospholipid + 8 AH2. The catalysed reaction is CDP-2,3-bis-O-(geranylgeranyl)-sn-glycerol + 8 AH2 = CDP-2,3-bis-O-(phytanyl)-sn-glycerol + 8 A. It catalyses the reaction archaetidylserine + 8 AH2 = 2,3-bis-O-phytanyl-sn-glycero-3-phospho-L-serine + 8 A. The protein operates within membrane lipid metabolism; glycerophospholipid metabolism. Is involved in the reduction of 2,3-digeranylgeranylglycerophospholipids (unsaturated archaeols) into 2,3-diphytanylglycerophospholipids (saturated archaeols) in the biosynthesis of archaeal membrane lipids. Catalyzes the formation of archaetidic acid (2,3-di-O-phytanyl-sn-glyceryl phosphate) from 2,3-di-O-geranylgeranylglyceryl phosphate (DGGGP) via the hydrogenation of each double bond of the isoprenoid chains. Is also probably able to reduce double bonds of geranyl groups in CDP-2,3-bis-O-(geranylgeranyl)-sn-glycerol and archaetidylserine, thus acting at various stages in the biosynthesis of archaeal membrane lipids. The chain is Digeranylgeranylglycerophospholipid reductase from Methanospirillum hungatei JF-1 (strain ATCC 27890 / DSM 864 / NBRC 100397 / JF-1).